A 615-amino-acid polypeptide reads, in one-letter code: DNA mismatch repair protein MutL (615 aa).

Residues 362–397 form a disordered region; the sequence is HFAEPAVREPVAPRYSPAPASGSRPAASWPNAQPGY. The span at 373–391 shows a compositional bias: low complexity; the sequence is APRYSPAPASGSRPAASWP.

This sequence belongs to the DNA mismatch repair MutL/HexB family.

Its function is as follows. This protein is involved in the repair of mismatches in DNA. It is required for dam-dependent methyl-directed DNA mismatch repair. May act as a 'molecular matchmaker', a protein that promotes the formation of a stable complex between two or more DNA-binding proteins in an ATP-dependent manner without itself being part of a final effector complex. The polypeptide is DNA mismatch repair protein MutL (Escherichia coli O45:K1 (strain S88 / ExPEC)).